Here is a 200-residue protein sequence, read N- to C-terminus: MSGFKQHTGLVVPLDAANVDTDAIIPKQFLQKVSRLGFGKHLFHDWRFLDDAGERPNPEFVMNAPRYQGASILLARENFGCGSSREHAPWALADYGIKAMIAPSFADIFYGNSINNQMVPVRLTEQEVDELFQFVEANEGAQIEVDLEALKVRANGKEYDFEIDEFRRHCLLNGLDNIGLTLQHEDKIAEYEANIPSFLR.

Belongs to the LeuD family. LeuD type 1 subfamily. As to quaternary structure, heterodimer of LeuC and LeuD.

It catalyses the reaction (2R,3S)-3-isopropylmalate = (2S)-2-isopropylmalate. It participates in amino-acid biosynthesis; L-leucine biosynthesis; L-leucine from 3-methyl-2-oxobutanoate: step 2/4. Its function is as follows. Catalyzes the isomerization between 2-isopropylmalate and 3-isopropylmalate, via the formation of 2-isopropylmaleate. This is 3-isopropylmalate dehydratase small subunit from Vibrio parahaemolyticus serotype O3:K6 (strain RIMD 2210633).